The chain runs to 554 residues: Serine/threonine-protein kinase ROP18 (554 aa).

Residues 17–40 traverse the membrane as a helical segment; sequence GLATLLPKTACLAGLNVALVFLLF. In terms of domain architecture, Protein kinase spans 252 to 531; that stretch reads LVRGAPLGSG…PLQALETAAF (280 aa). ATP-binding residues include Gly-262, Ala-264, and Lys-281. The N-linked (GlcNAc...) asparagine glycan is linked to Asn-306. Positions 357, 359, and 362 each coordinate ATP. The N-linked (GlcNAc...) asparagine glycan is linked to Asn-377. Asp-409 acts as the Proton acceptor in catalysis. Asp-427 contributes to the ATP binding site. A Mg(2+)-binding site is contributed by Asp-427. The N-linked (GlcNAc...) asparagine glycan is linked to Asn-434. Cys-478 and Cys-497 form a disulfide bridge.

This sequence belongs to the protein kinase superfamily. Ser/Thr protein kinase family. As to quaternary structure, component of a complex at least composed of ROP18, GRA7 and ROP2. Component of a complex at least composed of ROP18 and ROP5. Interacts with GRA7 in the absence of ROP5. Interacts with mouse IRGB6 (TGTP1/TGTP2).

The protein localises to the parasitophorous vacuole membrane. It is found in the cytoplasmic vesicle. Its subcellular location is the secretory vesicle. The protein resides in the rhoptry. The catalysed reaction is L-threonyl-[protein] + ATP = O-phospho-L-threonyl-[protein] + ADP + H(+). The enzyme catalyses L-seryl-[protein] + ATP = O-phospho-L-seryl-[protein] + ADP + H(+). Kinase activity is enhanced by polymorphic pseudokinase ROP5. Functionally, protein kinase. Virulence factor. Mediates parasite survival in mouse macrophages and monocytes. Reduces the accumulation of mouse IRGA6 (IIGP1) and IRGB6 (TGTP1/TGTP2), immunity-related GTPases (IRGs) that protect mice from infection by certain intracellular pathogens, on the parasitophorous vacuole and IRG-mediated killing of parasites by mouse cells; probably in connection with ROP5. In complex with GRA7, targets IRGs to prevent IRG-mediated parasite killing by mouse cells. Phosphorylates mouse IRGA6 (IIGP1); its activity toward mouse IRGA6 is promoted by GRA7 or ROP5. Phosphorylates mouse IRGB6 (TGTP1/TGTP2). Phosphorylates mouse IRGB10 (GM12250). Does not affect IFN-gamma (IFNG)-mediated parasite killing in human cells that do not possess the large variety of IRGs. This is Serine/threonine-protein kinase ROP18 from Toxoplasma gondii.